The chain runs to 312 residues: 26S proteasome non-ATPase regulatory subunit 14 (312 aa).

Residues 33 to 168 (VYISSLALLK…IDAFRTINPQ (136 aa)) enclose the MPN domain. 3 residues coordinate Zn(2+): H115, H117, and D128. Residues 115–128 (HSHPGFGCWLSGVD) carry the JAMM motif motif.

This sequence belongs to the peptidase M67A family. PSMD14 subfamily. In terms of assembly, component of the 19S regulatory cap of the 26S proteasome.

Functionally, metalloprotease component of the 26S proteasome that specifically cleaves 'Lys-63'-linked polyubiquitin chains. The 26S proteasome is involved in the ATP-dependent degradation of ubiquitinated proteins. The function of the 'Lys-63'-specific deubiquitination of the proteasome is unclear. In Caenorhabditis elegans, this protein is 26S proteasome non-ATPase regulatory subunit 14 (rpn-11).